The chain runs to 144 residues: Ribosomal RNA large subunit methyltransferase H (144 aa).

S-adenosyl-L-methionine contacts are provided by residues L63, G92, and 111–116; that span reads LSPMTF.

Belongs to the RNA methyltransferase RlmH family. As to quaternary structure, homodimer.

The protein localises to the cytoplasm. The enzyme catalyses pseudouridine(1915) in 23S rRNA + S-adenosyl-L-methionine = N(3)-methylpseudouridine(1915) in 23S rRNA + S-adenosyl-L-homocysteine + H(+). Its function is as follows. Specifically methylates the pseudouridine at position 1915 (m3Psi1915) in 23S rRNA. The chain is Ribosomal RNA large subunit methyltransferase H from Synechococcus sp. (strain CC9605).